Reading from the N-terminus, the 192-residue chain is Ion-translocating oxidoreductase complex subunit B (192 aa).

Positions 1–26 are hydrophobic; the sequence is MNTIWIAVGALTLLGLVFGAILGYAS. The 4Fe-4S domain maps to 32–91; the sequence is EDDPVVEKIDAILPQSQCGQCGYPGCRPYAEAVGLQGEKINRCAPGGEAVMLKMAELLNV. 12 residues coordinate [4Fe-4S] cluster: Cys-49, Cys-52, Cys-57, Cys-74, Cys-117, Cys-120, Cys-123, Cys-127, Cys-147, Cys-150, Cys-153, and Cys-157. 4Fe-4S ferredoxin-type domains are found at residues 108–137 and 138–167; these read MLAV…GATR and AMHT…LRPV.

The protein belongs to the 4Fe4S bacterial-type ferredoxin family. RnfB subfamily. As to quaternary structure, the complex is composed of six subunits: RsxA, RsxB, RsxC, RsxD, RsxE and RsxG. Requires [4Fe-4S] cluster as cofactor.

It localises to the cell inner membrane. Its function is as follows. Part of a membrane-bound complex that couples electron transfer with translocation of ions across the membrane. Required to maintain the reduced state of SoxR. The sequence is that of Ion-translocating oxidoreductase complex subunit B from Salmonella agona (strain SL483).